The sequence spans 78 residues: Large ribosomal subunit protein bL28 (78 aa).

Belongs to the bacterial ribosomal protein bL28 family.

The sequence is that of Large ribosomal subunit protein bL28 from Corynebacterium aurimucosum (strain ATCC 700975 / DSM 44827 / CIP 107346 / CN-1) (Corynebacterium nigricans).